Consider the following 317-residue polypeptide: Acetyl-coenzyme A carboxylase carboxyl transferase subunit alpha (317 aa).

One can recognise a CoA carboxyltransferase C-terminal domain in the interval 40-294 (RLQKKSEELT…KQQILADLQD (255 aa)).

It belongs to the AccA family. Acetyl-CoA carboxylase is a heterohexamer composed of biotin carboxyl carrier protein (AccB), biotin carboxylase (AccC) and two subunits each of ACCase subunit alpha (AccA) and ACCase subunit beta (AccD).

It localises to the cytoplasm. It catalyses the reaction N(6)-carboxybiotinyl-L-lysyl-[protein] + acetyl-CoA = N(6)-biotinyl-L-lysyl-[protein] + malonyl-CoA. The protein operates within lipid metabolism; malonyl-CoA biosynthesis; malonyl-CoA from acetyl-CoA: step 1/1. Its function is as follows. Component of the acetyl coenzyme A carboxylase (ACC) complex. First, biotin carboxylase catalyzes the carboxylation of biotin on its carrier protein (BCCP) and then the CO(2) group is transferred by the carboxyltransferase to acetyl-CoA to form malonyl-CoA. This Actinobacillus pleuropneumoniae serotype 5b (strain L20) protein is Acetyl-coenzyme A carboxylase carboxyl transferase subunit alpha.